The primary structure comprises 444 residues: ATP-dependent protease ATPase subunit HslU (444 aa).

ATP is bound by residues Val18, 60–65 (GVGKTE), Asp258, Glu323, and Arg395.

It belongs to the ClpX chaperone family. HslU subfamily. As to quaternary structure, a double ring-shaped homohexamer of HslV is capped on each side by a ring-shaped HslU homohexamer. The assembly of the HslU/HslV complex is dependent on binding of ATP.

It is found in the cytoplasm. Functionally, ATPase subunit of a proteasome-like degradation complex; this subunit has chaperone activity. The binding of ATP and its subsequent hydrolysis by HslU are essential for unfolding of protein substrates subsequently hydrolyzed by HslV. HslU recognizes the N-terminal part of its protein substrates and unfolds these before they are guided to HslV for hydrolysis. The chain is ATP-dependent protease ATPase subunit HslU from Thioalkalivibrio sulfidiphilus (strain HL-EbGR7).